The chain runs to 292 residues: Protein sarah (292 aa).

Low complexity predominate over residues 1–51 (MSDAAKSNNNASADAPDPTTPDATGEADAANAATPTTPRGNHNNNNSANGR). Positions 1–111 (MSDAAKSNNN…TEPEVDADSF (111 aa)) are disordered. Serine 67, serine 72, and serine 100 each carry phosphoserine. A compositionally biased stretch (acidic residues) spans 98-111 (VDSDTEPEVDADSF). A phosphothreonine mark is found at threonine 102 and threonine 196. 2 positions are modified to phosphoserine: serine 215 and serine 219. At threonine 246 the chain carries Phosphothreonine.

Belongs to the RCAN family. As to quaternary structure, interacts with Pp2B-14D, CanA-14F and CanB2. Post-translationally, phosphorylation at Ser-215 and Ser-219 is essential for calcineurin activation and completion of female meiosis. Sgg is required for phosphorylation of Ser-215 in activated eggs. Ser-100, Thr-102 and Ser-219 are highly phosphorylated in both ovaries and activated eggs; however, phosphorylation at Ser-100 or Thr-102 is not required for sra function in completion of female meiosis. As to expression, expressed in central nervous system of the third instar larvae, with a relatively intense signal in the brain and weak signals in the ventral ganglion. Relatively low, but ubiquitous expression level is observed in leg and wing imaginal disks, no signal is detected in the eye-antennal disks. Expressed in all neurons in the adult brain.

Required for elongation of meiosis I spindle. Critical for ovulation, meiotic progression in oocytes and female courtship behavior, including their postmating changes. Regulates female meiosis by controlling calcineurin activity in the germline. Has a role in calcium signaling during egg activation; bcd mRNA polyadenylation and translation in the oocyte. This chain is Protein sarah (sra), found in Drosophila melanogaster (Fruit fly).